A 387-amino-acid chain; its full sequence is Putative serine/threonine-protein kinase (387 aa).

The region spanning 15–344 (YQIEKLLNRG…ERVLEGQVEI (330 aa)) is the Protein kinase domain. ATP is bound by residues 21–29 (LNRGGMDSY) and K55. D164 acts as the Proton acceptor in catalysis. Helical transmembrane passes span 232–252 (PPNA…MLVG) and 363–383 (SIFT…LLIF).

It belongs to the protein kinase superfamily. Ser/Thr protein kinase family.

The protein resides in the cell membrane. The catalysed reaction is L-seryl-[protein] + ATP = O-phospho-L-seryl-[protein] + ADP + H(+). The enzyme catalyses L-threonyl-[protein] + ATP = O-phospho-L-threonyl-[protein] + ADP + H(+). This is Putative serine/threonine-protein kinase from Mycoplasma genitalium (strain ATCC 33530 / DSM 19775 / NCTC 10195 / G37) (Mycoplasmoides genitalium).